The primary structure comprises 307 residues: Aspartate carbamoyltransferase catalytic subunit (307 aa).

Carbamoyl phosphate is bound by residues arginine 56 and threonine 57. Lysine 84 contacts L-aspartate. Residues arginine 106, histidine 136, and glutamine 139 each contribute to the carbamoyl phosphate site. The L-aspartate site is built by arginine 169 and arginine 221. Carbamoyl phosphate contacts are provided by alanine 262 and proline 263.

The protein belongs to the aspartate/ornithine carbamoyltransferase superfamily. ATCase family. In terms of assembly, heterododecamer (2C3:3R2) of six catalytic PyrB chains organized as two trimers (C3), and six regulatory PyrI chains organized as three dimers (R2).

It carries out the reaction carbamoyl phosphate + L-aspartate = N-carbamoyl-L-aspartate + phosphate + H(+). The protein operates within pyrimidine metabolism; UMP biosynthesis via de novo pathway; (S)-dihydroorotate from bicarbonate: step 2/3. In terms of biological role, catalyzes the condensation of carbamoyl phosphate and aspartate to form carbamoyl aspartate and inorganic phosphate, the committed step in the de novo pyrimidine nucleotide biosynthesis pathway. This Streptococcus pneumoniae serotype 2 (strain D39 / NCTC 7466) protein is Aspartate carbamoyltransferase catalytic subunit.